A 293-amino-acid polypeptide reads, in one-letter code: Probable porphobilinogen deaminase (293 aa).

Cys233 carries the S-(dipyrrolylmethanemethyl)cysteine modification.

Belongs to the HMBS family. Dipyrromethane serves as cofactor.

It carries out the reaction 4 porphobilinogen + H2O = hydroxymethylbilane + 4 NH4(+). The protein operates within porphyrin-containing compound metabolism; protoporphyrin-IX biosynthesis; coproporphyrinogen-III from 5-aminolevulinate: step 2/4. Its function is as follows. Tetrapolymerization of the monopyrrole PBG into the hydroxymethylbilane pre-uroporphyrinogen in several discrete steps. The chain is Probable porphobilinogen deaminase from Saccharolobus islandicus (strain M.16.27) (Sulfolobus islandicus).